Consider the following 91-residue polypeptide: Uteroglobin (91 aa).

The N-terminal stretch at 1 to 21 is a signal peptide; it reads MKLTITLALVTLALLCSPASA.

It belongs to the secretoglobin family. As to quaternary structure, antiparallel homodimer; disulfide-linked. Interaction with LMBR1L is controversial.

It is found in the secreted. In terms of biological role, uteroglobin binds progesterone specifically and with high affinity. It may regulate progesterone concentrations reaching the blastocyst. It is also a potent inhibitor of phospholipase A2. This is Uteroglobin (SCGB1A1) from Lepus capensis (Brown hare).